Here is a 30-residue protein sequence, read N- to C-terminus: Acyl-CoA-binding protein 1 (30 aa).

The span at 1–15 (ALKDEFEEHAEKAKT) shows a compositional bias: basic and acidic residues. Residues 1–30 (ALKDEFEEHAEKAKTLPENTSNENKLILYG) are disordered. Residues 2 to 30 (LKDEFEEHAEKAKTLPENTSNENKLILYG) form the ACB domain.

This sequence belongs to the ACBP family.

Its subcellular location is the cytoplasm. Its function is as follows. Binds medium- and long-chain acyl-CoA esters with very high affinity and may function as an intracellular carrier of acyl-CoA esters. The polypeptide is Acyl-CoA-binding protein 1 (Digitalis lanata (Grecian foxglove)).